The sequence spans 208 residues: Cell death-inducing p53-target protein 1 (208 aa).

Pro residues-rich tracts occupy residues 1–13 and 36–67; these read MSSEPPPPYPGGP and MQPPPGMPLPPADIGPPPYEPPGHPMPQPGFI. The tract at residues 1–71 is disordered; the sequence is MSSEPPPPYP…PQPGFIPPHM (71 aa). The LITAF domain maps to 122–206; it reads ATTVTVLQGE…CKAYIYTYKR (85 aa). Zn(2+) contacts are provided by Cys-142 and Cys-145. The interval 164–184 is membrane-binding amphipathic helix; it reads LGFFCCFMGCDLGCCLIPCLI. Residues Cys-194 and Cys-197 each coordinate Zn(2+).

Belongs to the CDIP1/LITAF family. As to expression, highly expressed in brain. Expressed at lower level in heart, skeletal muscle, kidney, pancreas and liver. Weakly or not expressed in placenta and lung.

Its subcellular location is the late endosome membrane. It localises to the lysosome membrane. Functionally, acts as an important p53/TP53-apoptotic effector. Regulates TNF-alpha-mediated apoptosis in a p53/TP53-dependent manner. The sequence is that of Cell death-inducing p53-target protein 1 (CDIP1) from Homo sapiens (Human).